The primary structure comprises 146 residues: Hemoglobin subunit beta (146 aa).

The residue at position 1 (V1) is an N-acetylvaline. One can recognise a Globin domain in the interval 2–146 (HLTADEKAAV…VATALAHKYH (145 aa)). T12 is subject to Phosphothreonine. S44 is subject to Phosphoserine. At K59 the chain carries N6-acetyllysine. A heme b-binding site is contributed by H63. K82 carries the post-translational modification N6-acetyllysine. H92 contributes to the heme b binding site. An S-nitrosocysteine modification is found at C93. N6-acetyllysine is present on K144.

This sequence belongs to the globin family. As to quaternary structure, heterotetramer of two alpha chains and two beta chains. In terms of tissue distribution, red blood cells.

Functionally, involved in oxygen transport from the lung to the various peripheral tissues. The polypeptide is Hemoglobin subunit beta (HBB) (Cephalopachus bancanus (Western tarsier)).